Reading from the N-terminus, the 125-residue chain is Small ribosomal subunit protein eS8 (125 aa).

Belongs to the eukaryotic ribosomal protein eS8 family. Part of the 30S ribosomal subunit.

The protein is Small ribosomal subunit protein eS8 of Methanosarcina mazei (strain ATCC BAA-159 / DSM 3647 / Goe1 / Go1 / JCM 11833 / OCM 88) (Methanosarcina frisia).